The primary structure comprises 712 residues: Polyribonucleotide nucleotidyltransferase (712 aa).

2 residues coordinate Mg(2+): Asp493 and Asp499. Positions 560–619 (PRLLTFKVDPEDIGKIIGPGGKMVRSITEATGAKVDISDDGTITVSSSVGGQAEAARAMI) constitute a KH domain. Positions 629–697 (GQVYLGKVTR…HKGRVNLTRL (69 aa)) constitute an S1 motif domain.

This sequence belongs to the polyribonucleotide nucleotidyltransferase family. Mg(2+) is required as a cofactor.

The protein localises to the cytoplasm. It catalyses the reaction RNA(n+1) + phosphate = RNA(n) + a ribonucleoside 5'-diphosphate. In terms of biological role, involved in mRNA degradation. Catalyzes the phosphorolysis of single-stranded polyribonucleotides processively in the 3'- to 5'-direction. This Synechococcus sp. (strain JA-3-3Ab) (Cyanobacteria bacterium Yellowstone A-Prime) protein is Polyribonucleotide nucleotidyltransferase.